Consider the following 748-residue polypeptide: 5-methyltetrahydropteroyltriglutamate--homocysteine methyltransferase (748 aa).

5-methyltetrahydropteroyltri-L-glutamate is bound at residue Lys111. Residues 428–430 and Glu478 contribute to the L-homocysteine site; that span reads IGS. L-methionine contacts are provided by residues 428–430 and Glu478; that span reads IGS. Residues 509 to 510 and Trp555 contribute to the 5-methyltetrahydropteroyltri-L-glutamate site; that span reads RC. L-homocysteine is bound at residue Asp593. Asp593 contributes to the L-methionine binding site. Residue Glu599 coordinates 5-methyltetrahydropteroyltri-L-glutamate. Zn(2+)-binding residues include His635, Cys637, and Glu659. His687 acts as the Proton donor in catalysis. Cys719 is a Zn(2+) binding site.

This sequence belongs to the vitamin-B12 independent methionine synthase family. Requires Zn(2+) as cofactor.

The catalysed reaction is 5-methyltetrahydropteroyltri-L-glutamate + L-homocysteine = tetrahydropteroyltri-L-glutamate + L-methionine. It participates in amino-acid biosynthesis; L-methionine biosynthesis via de novo pathway; L-methionine from L-homocysteine (MetE route): step 1/1. Functionally, catalyzes the transfer of a methyl group from 5-methyltetrahydrofolate to homocysteine resulting in methionine formation. This chain is 5-methyltetrahydropteroyltriglutamate--homocysteine methyltransferase, found in Herpetosiphon aurantiacus (strain ATCC 23779 / DSM 785 / 114-95).